The chain runs to 429 residues: Serine hydroxymethyltransferase (429 aa).

Residues Leu126 and 130-132 each bind (6S)-5,6,7,8-tetrahydrofolate; that span reads GHL. Position 235 is an N6-(pyridoxal phosphate)lysine (Lys235). 359 to 361 lines the (6S)-5,6,7,8-tetrahydrofolate pocket; sequence SPF.

It belongs to the SHMT family. In terms of assembly, homodimer. The cofactor is pyridoxal 5'-phosphate.

Its subcellular location is the cytoplasm. The catalysed reaction is (6R)-5,10-methylene-5,6,7,8-tetrahydrofolate + glycine + H2O = (6S)-5,6,7,8-tetrahydrofolate + L-serine. The protein operates within one-carbon metabolism; tetrahydrofolate interconversion. Its pathway is amino-acid biosynthesis; glycine biosynthesis; glycine from L-serine: step 1/1. Catalyzes the reversible interconversion of serine and glycine with tetrahydrofolate (THF) serving as the one-carbon carrier. This reaction serves as the major source of one-carbon groups required for the biosynthesis of purines, thymidylate, methionine, and other important biomolecules. Also exhibits THF-independent aldolase activity toward beta-hydroxyamino acids, producing glycine and aldehydes, via a retro-aldol mechanism. The sequence is that of Serine hydroxymethyltransferase from Synechococcus sp. (strain WH7803).